We begin with the raw amino-acid sequence, 290 residues long: MLKTIQDKARHRTRPLWAWLKLLWQRIDEDNMTTLAGNLAYVSLLSLVPLVAVVFALFAAFPMFSDVSIQLRHFIFANFLPATGDVIQRYIEQFVANSNKMTAVGACGLIVTALLLMYSIDSALNAIWRSKRARPKIYSFAVYWMILTLGPLLAGASLAISSYLLSLRWASDLNTVIDNVLRIFPLLLSWISFWLLYSIVPTIRVPNRDAIVGAFVAALLFEAGKKGFALYITMFPSYQLIYGVLAVIPILFVWVYWTWCIVLLGAEITVTLGEYRKLKQAAEQEEDDEP.

6 helical membrane-spanning segments follow: residues 44-64 (LLSL…FPMF), 104-124 (VGAC…DSAL), 140-160 (FAVY…SLAI), 183-203 (IFPL…VPTI), 210-230 (AIVG…GFAL), and 244-264 (VLAV…IVLL).

This sequence belongs to the UPF0761 family.

The protein localises to the cell inner membrane. This is UPF0761 membrane protein YihY from Escherichia coli O7:K1 (strain IAI39 / ExPEC).